The primary structure comprises 512 residues: Kynurenine 3-monooxygenase (512 aa).

The protein belongs to the aromatic-ring hydroxylase family. KMO subfamily. The cofactor is FAD.

Its subcellular location is the mitochondrion outer membrane. The enzyme catalyses L-kynurenine + NADPH + O2 + H(+) = 3-hydroxy-L-kynurenine + NADP(+) + H2O. It participates in cofactor biosynthesis; NAD(+) biosynthesis; quinolinate from L-kynurenine: step 1/3. In terms of biological role, catalyzes the hydroxylation of L-kynurenine (L-Kyn) to form 3-hydroxy-L-kynurenine (L-3OHKyn). Required for synthesis of quinolinic acid. This is Kynurenine 3-monooxygenase (bna4) from Aspergillus fumigatus (strain ATCC MYA-4609 / CBS 101355 / FGSC A1100 / Af293) (Neosartorya fumigata).